The chain runs to 1384 residues: DNA-directed RNA polymerase subunit beta'' (1384 aa).

4 residues coordinate Zn(2+): C224, C297, C304, and C307.

It belongs to the RNA polymerase beta' chain family. RpoC2 subfamily. As to quaternary structure, in plastids the minimal PEP RNA polymerase catalytic core is composed of four subunits: alpha, beta, beta', and beta''. When a (nuclear-encoded) sigma factor is associated with the core the holoenzyme is formed, which can initiate transcription. The cofactor is Zn(2+).

The protein localises to the plastid. Its subcellular location is the chloroplast. It catalyses the reaction RNA(n) + a ribonucleoside 5'-triphosphate = RNA(n+1) + diphosphate. In terms of biological role, DNA-dependent RNA polymerase catalyzes the transcription of DNA into RNA using the four ribonucleoside triphosphates as substrates. This Sinapis alba (White mustard) protein is DNA-directed RNA polymerase subunit beta''.